The primary structure comprises 198 residues: Ribosome maturation factor RimP (198 aa).

Belongs to the RimP family.

It is found in the cytoplasm. Required for maturation of 30S ribosomal subunits. The polypeptide is Ribosome maturation factor RimP (Rhizobium etli (strain ATCC 51251 / DSM 11541 / JCM 21823 / NBRC 15573 / CFN 42)).